Reading from the N-terminus, the 428-residue chain is Spliceosome RNA helicase Ddx39b (428 aa).

Acidic residues predominate over residues 1–19; it reads MAENDVDNELLDYEDDEVE. A disordered region spans residues 1–31; the sequence is MAENDVDNELLDYEDDEVETAAGADGTEAPA. A2 is modified (N-acetylalanine). K36 is subject to N6-acetyllysine; alternate. K36 participates in a covalent cross-link: Glycyl lysine isopeptide (Lys-Gly) (interchain with G-Cter in SUMO2); alternate. Residues S38 and S41 each carry the phosphoserine modification. The short motif at 45–73 is the Q motif element; that stretch reads SGFRDFLLKPELLRAIVDCGFEHPSEVQH. The 174-residue stretch at 76-249 folds into the Helicase ATP-binding domain; it reads IPQAILGMDV…RKFMQDPMEI (174 aa). ATP is bound at residue 89–96; it reads AKSGMGKT. T172 is subject to Phosphothreonine. The short motif at 196–199 is the DECD box element; it reads DECD. The 162-residue stretch at 261-422 folds into the Helicase C-terminal domain; that stretch reads GLQQYYVKLK…ELPDEIDISS (162 aa).

It belongs to the DEAD box helicase family. DECD subfamily. In terms of assembly, homodimer, and heterodimer with DDX39A. DDX39B interacts with the THO subcomplex to form the THO-DDX39B complex which multimerizes into a 28-subunit tetrameric assembly. Component of the transcription/export (TREX) complex at least composed of ALYREF/THOC4, DDX39B, SARNP/CIP29, CHTOP and the THO subcomplex; in the complex interacts with THOC2. THOC1-THOC2-THOC3-DDX39B subcomplex is sufficient for the interaction with export factor NXF1-NXT1. TREX seems to have a dynamic structure involving ATP-dependent remodeling. Within the TREX complex bridges ALYREF/THOC4 and the THO subcomplex, and, in a ATP-dependent manner, ALYREF/THOC4 and SARNP/CIP29. Component of the spliceosome. Interacts directly with U2AF2. Interacts with RBM8A, RNPS1 and SRRM1, FYTTD1/UIF, THOC1, MX1 and POLDIP3. Interacts with LUZP4. Interacts with SARNP/CIP29 (via the C-terminal domain); the interaction is direct and facilitates RNA binding of DDX39B.

The protein localises to the nucleus. Its subcellular location is the nucleus speckle. The protein resides in the cytoplasm. It catalyses the reaction ATP + H2O = ADP + phosphate + H(+). Functionally, involved in nuclear export of spliced and unspliced mRNA. Component of the TREX complex which is thought to couple mRNA transcription, processing and nuclear export, and specifically associates with spliced mRNA and not with unspliced pre-mRNA. The TREX complex is recruited to spliced mRNAs by a transcription-independent mechanism, binds to mRNA upstream of the exon-junction complex (EJC) and is recruited in a splicing- and cap-dependent manner to a region near the 5' end of the mRNA where it functions in mRNA export to the cytoplasm via the TAP/NXF1 pathway. The THOC1-THOC2-THOC3 core complex alone is sufficient to promote ATPase activity of DDX39B; in the complex THOC2 is the only component that directly interacts with DDX39B. Associates with SARNP/CIP29, which facilitates RNA binding of DDX39B and likely plays a role in mRNA export. May undergo several rounds of ATP hydrolysis during assembly of TREX to drive subsequent loading of components such as ALYREF/THOC4 and CHTOP onto mRNA. Also associates with pre-mRNA independent of ALYREF/THOC4. Involved in the nuclear export of intronless mRNA; the ATP-bound form is proposed to recruit export adapter ALYREF/THOC4 to intronless mRNA; its ATPase activity is cooperatively stimulated by RNA and ALYREF/THOC4 and ATP hydrolysis is thought to trigger the dissociation from RNA to allow the association of ALYREF/THOC4 and the NXF1-NXT1 heterodimer. Involved in transcription elongation and genome stability. Its function is as follows. Splice factor that is required for the first ATP-dependent step in spliceosome assembly and for the interaction of U2 snRNP with the branchpoint. Has both RNA-stimulated ATP binding/hydrolysis activity and ATP-dependent RNA unwinding activity. Even with the stimulation of RNA, the ATPase activity is weak. Can only hydrolyze ATP but not other NTPs. The RNA stimulation of ATPase activity does not have a strong preference for the sequence and length of the RNA. However, ssRNA stimulates the ATPase activity much more strongly than dsRNA. Can unwind 5' or 3' overhangs or blunt end RNA duplexes in vitro. The ATPase and helicase activities are not influenced by U2AF2; the effect of ALYREF/THOC4 is reported conflictingly. This chain is Spliceosome RNA helicase Ddx39b (Ddx39b), found in Mus musculus (Mouse).